Reading from the N-terminus, the 250-residue chain is 7-cyano-7-deazaguanine synthase (250 aa).

Residue 28-38 (LSGGLDSATCV) participates in ATP binding. C213, C226, C229, and C232 together coordinate Zn(2+).

This sequence belongs to the QueC family. It depends on Zn(2+) as a cofactor.

It carries out the reaction 7-carboxy-7-deazaguanine + NH4(+) + ATP = 7-cyano-7-deazaguanine + ADP + phosphate + H2O + H(+). The protein operates within purine metabolism; 7-cyano-7-deazaguanine biosynthesis. Functionally, catalyzes the ATP-dependent conversion of 7-carboxy-7-deazaguanine (CDG) to 7-cyano-7-deazaguanine (preQ(0)). The chain is 7-cyano-7-deazaguanine synthase from Rhodopirellula baltica (strain DSM 10527 / NCIMB 13988 / SH1).